A 61-amino-acid chain; its full sequence is Truncated Cytokine response-modifying protein B (61 aa).

Functionally, the protein is truncated in this strain and presumably inactive. It has similarities with variola virus CrmB, but the product is inactivated due to several premature stop codon. The sequence is that of Truncated Cytokine response-modifying protein B from Bos taurus (Bovine).